Here is a 72-residue protein sequence, read N- to C-terminus: Small ribosomal subunit protein bS20 (72 aa).

It belongs to the bacterial ribosomal protein bS20 family.

In terms of biological role, binds directly to 16S ribosomal RNA. The protein is Small ribosomal subunit protein bS20 (rpsT) of Klebsiella pneumoniae.